The primary structure comprises 336 residues: Holliday junction branch migration complex subunit RuvB (336 aa).

The large ATPase domain (RuvB-L) stretch occupies residues 4-184 (ADRLISAGTT…FGIVQRLEFY (181 aa)). ATP-binding positions include Ile23, Arg24, Gly65, Lys68, Thr69, Thr70, 131 to 133 (EDY), Arg174, Tyr184, and Arg221. Thr69 contacts Mg(2+). The segment at 185 to 255 (QVPDLQYIVS…IAAQALDMLN (71 aa)) is small ATPAse domain (RuvB-S). Residues 258–336 (AEGFDYMDRK…HFGITPPEMP (79 aa)) are head domain (RuvB-H). Residues Arg294, Arg313, and Arg318 each contribute to the DNA site.

The protein belongs to the RuvB family. As to quaternary structure, homohexamer. Forms an RuvA(8)-RuvB(12)-Holliday junction (HJ) complex. HJ DNA is sandwiched between 2 RuvA tetramers; dsDNA enters through RuvA and exits via RuvB. An RuvB hexamer assembles on each DNA strand where it exits the tetramer. Each RuvB hexamer is contacted by two RuvA subunits (via domain III) on 2 adjacent RuvB subunits; this complex drives branch migration. In the full resolvosome a probable DNA-RuvA(4)-RuvB(12)-RuvC(2) complex forms which resolves the HJ.

It localises to the cytoplasm. The enzyme catalyses ATP + H2O = ADP + phosphate + H(+). Its function is as follows. The RuvA-RuvB-RuvC complex processes Holliday junction (HJ) DNA during genetic recombination and DNA repair, while the RuvA-RuvB complex plays an important role in the rescue of blocked DNA replication forks via replication fork reversal (RFR). RuvA specifically binds to HJ cruciform DNA, conferring on it an open structure. The RuvB hexamer acts as an ATP-dependent pump, pulling dsDNA into and through the RuvAB complex. RuvB forms 2 homohexamers on either side of HJ DNA bound by 1 or 2 RuvA tetramers; 4 subunits per hexamer contact DNA at a time. Coordinated motions by a converter formed by DNA-disengaged RuvB subunits stimulates ATP hydrolysis and nucleotide exchange. Immobilization of the converter enables RuvB to convert the ATP-contained energy into a lever motion, pulling 2 nucleotides of DNA out of the RuvA tetramer per ATP hydrolyzed, thus driving DNA branch migration. The RuvB motors rotate together with the DNA substrate, which together with the progressing nucleotide cycle form the mechanistic basis for DNA recombination by continuous HJ branch migration. Branch migration allows RuvC to scan DNA until it finds its consensus sequence, where it cleaves and resolves cruciform DNA. The chain is Holliday junction branch migration complex subunit RuvB from Shigella sonnei (strain Ss046).